The sequence spans 96 residues: Large ribosomal subunit protein bL21 (96 aa).

Residues 73 to 84 (KRRKRYQSRNGH) are compositionally biased toward basic residues. Residues 73 to 96 (KRRKRYQSRNGHRQQMTQIEVVSL) form a disordered region. The segment covering 85–96 (RQQMTQIEVVSL) has biased composition (polar residues).

The protein belongs to the bacterial ribosomal protein bL21 family. In terms of assembly, part of the 50S ribosomal subunit. Contacts protein L20.

Its function is as follows. This protein binds to 23S rRNA in the presence of protein L20. The sequence is that of Large ribosomal subunit protein bL21 from Chlorobium luteolum (strain DSM 273 / BCRC 81028 / 2530) (Pelodictyon luteolum).